The chain runs to 392 residues: Pannexin-3 (392 aa).

Residues 1–39 (MSLAHTAAEYMLSDALLPDRRGSRLKGLRLELPLDKMVK) lie on the Cytoplasmic side of the membrane. The chain crosses the membrane as a helical span at residues 40–60 (FITVGFPLLLMSLAFAQEFSS). At 61-113 (GSPISCFSPSNFSVRQAAYVDSSCWDSLAHHTQDKAGQYKVKSLWPHKALPYS) the chain is on the extracellular side. N-linked (GlcNAc...) asparagine glycosylation is present at asparagine 71. Residues 114 to 134 (LLALAVAMYLPVLLWQYVAVP) traverse the membrane as a helical segment. At 135 to 215 (SLSSDLLFII…VATYLLRNAL (81 aa)) the chain is on the cytoplasmic side. The helical transmembrane segment at 216–236 (LLLFTSATYLYLGQFHLDVFF) threads the bilayer. The Extracellular segment spans residues 237–267 (QDEFNCFIKTGLLHDETHVPELITCRLTSLS). The chain crosses the membrane as a helical span at residues 268 to 288 (VFQIVSVSSAAIYTILVPVII). The Cytoplasmic portion of the chain corresponds to 289–392 (YNLTRLCRWD…LTQHTYDEHA (104 aa)).

Belongs to the pannexin family. As to quaternary structure, homoheptameric. N-glycosylation may play a role in cell surface targeting. As to expression, expressed in skin, cartilage, heart, lung, liver, spleen, thymus and kidney. Not expressed in brain. Expressed in calvarial cells.

Its subcellular location is the cell membrane. The protein localises to the endoplasmic reticulum membrane. It catalyses the reaction Ca(2+)(in) = Ca(2+)(out). It carries out the reaction ATP(in) = ATP(out). In terms of biological role, regulator of osteoblast differentiation by functionning as a Ca(2+) channel in the endoplasmic reticulum which regulates calmodulin (CaM) pathways. Allows ATP release into the extracellular space and activation or purinergic receptors. This is Pannexin-3 (Panx3) from Mus musculus (Mouse).